Reading from the N-terminus, the 85-residue chain is Fungal defensin triintsin (85 aa).

An N-terminal signal peptide occupies residues Met-1–Ala-21. Residues Ala-22 to Arg-47 constitute a propeptide that is removed on maturation. 3 disulfide bridges follow: Cys-51/Cys-72, Cys-58/Cys-80, and Cys-62/Cys-82.

This sequence belongs to the invertebrate defensin family. Post-translationally, disulfide bonds are essential for antimicrobial activity.

Its subcellular location is the secreted. Functionally, antimicrobial peptide with broad-spectrum activity against Gram-positive bacteria, Gram-negative bacteria, and fungi. Also inhibits clinical isolates, including methicillin-resistant S.aureus (MRSA) (MIC=32 uM), K.pneumoniae, C.albicans and C.parapsilosis. Displays minimal inhibitory concentration (MIC) values similar to minimal bactericidal concentrations (MBC), suggesting a disruptive mechanism mode of action associated with membrane lysis. In vitro, shows hemolytic activity against human red blood cells. The sequence is that of Fungal defensin triintsin from Trichophyton interdigitale (strain MR816).